Reading from the N-terminus, the 918-residue chain is Plasma membrane ATPase 1 (918 aa).

Residues 1-18 (MTDTSSSSSSSSASSVSA) show a composition bias toward low complexity. A disordered region spans residues 1 to 84 (MTDTSSSSSS…VPEEYLQTDP (84 aa)). Residues 1–115 (MTDTSSSSSS…ADEKESLVVK (115 aa)) are Cytoplasmic-facing. Residues 33–47 (AASESSDDDDIDALI) show a composition bias toward acidic residues. Serine 61 is modified (phosphoserine). A helical membrane pass occupies residues 116 to 136 (FVMFFVGPIQFVMEAAAILAA). Residues 137–140 (GLSD) lie on the Extracellular side of the membrane. A helical transmembrane segment spans residues 141–160 (WVDFGVICGLLMLNAGVGFV). At 161-291 (QEFQAGSIVD…GQGHFTEVLN (131 aa)) the chain is on the cytoplasmic side. Threonine 175 bears the Phosphothreonine mark. A Glycyl lysine isopeptide (Lys-Gly) (interchain with G-Cter in ubiquitin) cross-link involves residue lysine 252. Residues 292–313 (GIGIILLVLVIATLLLVWTACF) form a helical membrane-spanning segment. Residues 314–325 (YRTNGIVRILRY) lie on the Extracellular side of the membrane. A helical membrane pass occupies residues 326–347 (TLGITIIGVPVGLPAVVTTTMA). The Cytoplasmic portion of the chain corresponds to 348 to 719 (VGAAYLAKKQ…IAILDNSLDI (372 aa)). The active-site 4-aspartylphosphate intermediate is the aspartate 378. A Glycyl lysine isopeptide (Lys-Gly) (interchain with G-Cter in ubiquitin) cross-link involves residue lysine 555. Mg(2+)-binding residues include aspartate 634 and aspartate 638. The chain crosses the membrane as a helical span at residues 720-738 (DLIVFIAIFADVATLAIAY). Residues 739–754 (DNAPYSPKPVKWNLPR) are Extracellular-facing. Residues 755 to 774 (LWGMSIILGIVLAIGSWITL) form a helical membrane-spanning segment. The Cytoplasmic segment spans residues 775–824 (TTMFLPKGGIIQNFGAMNGIMFLQISLTENWLIFITRAAGPFWSSIPSWQ). Residues 825 to 845 (LAGAVFAVDIIATMFTLFGWW) traverse the membrane as a helical segment. The Extracellular segment spans residues 846 to 857 (SENWTDIVTVVR). Residues 858-874 (VWIWSIGIFCVLGGFYY) form a helical membrane-spanning segment. Over 875 to 918 (EMSTSEAFDRLMNGKPMKEKKSTRSVEDFMAAMQRVSTQHEKET) the chain is Cytoplasmic. Phosphoserine is present on serine 911. 2 positions are modified to phosphothreonine: threonine 912 and threonine 918.

The protein belongs to the cation transport ATPase (P-type) (TC 3.A.3) family. Type IIIA subfamily. In terms of assembly, interacts with its cargot receptor EXP1 for its transport within the cell and maturation. Phosphorylated on multiple Ser and Thr residues.

The protein resides in the cell membrane. The catalysed reaction is ATP + H2O + H(+)(in) = ADP + phosphate + 2 H(+)(out). Its function is as follows. The plasma membrane ATPase of plants and fungi is a hydrogen ion pump. The proton gradient it generates drives the active transport of nutrients by H(+)-symport. The resulting external acidification and/or internal alkinization may mediate growth responses. This chain is Plasma membrane ATPase 1 (PMA1), found in Saccharomyces cerevisiae (strain ATCC 204508 / S288c) (Baker's yeast).